The chain runs to 410 residues: Cytochrome P450(BM-1) (410 aa).

Residue Cys-356 coordinates heme.

Belongs to the cytochrome P450 family. Heme is required as a cofactor.

It is found in the cytoplasm. Cytochromes P450 are a group of heme-thiolate monooxygenases. They oxidize a variety of structurally unrelated compounds, including steroids, fatty acids, and xenobiotics. This is Cytochrome P450(BM-1) (cyp106) from Priestia megaterium (strain ATCC 14581 / DSM 32 / CCUG 1817 / JCM 2506 / NBRC 15308 / NCIMB 9376 / NCTC 10342 / NRRL B-14308 / VKM B-512 / Ford 19) (Bacillus megaterium).